The following is a 633-amino-acid chain: 1-deoxy-D-xylulose-5-phosphate synthase (633 aa).

Residues histidine 74 and 115–117 contribute to the thiamine diphosphate site; that span reads GHA. Residue aspartate 146 coordinates Mg(2+). Thiamine diphosphate is bound by residues 147-148, asparagine 175, tyrosine 286, and glutamate 363; that span reads GA. Asparagine 175 is a binding site for Mg(2+).

The protein belongs to the transketolase family. DXPS subfamily. Homodimer. Requires Mg(2+) as cofactor. Thiamine diphosphate serves as cofactor.

The catalysed reaction is D-glyceraldehyde 3-phosphate + pyruvate + H(+) = 1-deoxy-D-xylulose 5-phosphate + CO2. It functions in the pathway metabolic intermediate biosynthesis; 1-deoxy-D-xylulose 5-phosphate biosynthesis; 1-deoxy-D-xylulose 5-phosphate from D-glyceraldehyde 3-phosphate and pyruvate: step 1/1. Its function is as follows. Catalyzes the acyloin condensation reaction between C atoms 2 and 3 of pyruvate and glyceraldehyde 3-phosphate to yield 1-deoxy-D-xylulose-5-phosphate (DXP). The protein is 1-deoxy-D-xylulose-5-phosphate synthase of Dehalococcoides mccartyi (strain ATCC BAA-2100 / JCM 16839 / KCTC 5957 / BAV1).